Consider the following 425-residue polypeptide: Serine--tRNA ligase (425 aa).

230 to 232 serves as a coordination point for L-serine; it reads TAE. 261 to 263 lines the ATP pocket; that stretch reads RSE. Glu-284 contacts L-serine. 348-351 is a binding site for ATP; that stretch reads EISS. Ser-384 contributes to the L-serine binding site.

This sequence belongs to the class-II aminoacyl-tRNA synthetase family. Type-1 seryl-tRNA synthetase subfamily. In terms of assembly, homodimer. The tRNA molecule binds across the dimer.

It localises to the cytoplasm. It carries out the reaction tRNA(Ser) + L-serine + ATP = L-seryl-tRNA(Ser) + AMP + diphosphate + H(+). The catalysed reaction is tRNA(Sec) + L-serine + ATP = L-seryl-tRNA(Sec) + AMP + diphosphate + H(+). Its pathway is aminoacyl-tRNA biosynthesis; selenocysteinyl-tRNA(Sec) biosynthesis; L-seryl-tRNA(Sec) from L-serine and tRNA(Sec): step 1/1. Catalyzes the attachment of serine to tRNA(Ser). Is also able to aminoacylate tRNA(Sec) with serine, to form the misacylated tRNA L-seryl-tRNA(Sec), which will be further converted into selenocysteinyl-tRNA(Sec). In Streptococcus pyogenes serotype M5 (strain Manfredo), this protein is Serine--tRNA ligase.